Consider the following 236-residue polypeptide: MGRNSGFTFKQFHVEHDRCAMKVGTDGILLGAWAPVAETRRVLDIGTGSGLVALMLAQRSRSDCIIDAVDLDMNAATQARENVAASPWETRINIMEGAIQDYQATPYDLIVSNPPYFGAGQSLRDPARALARHTGSLDSRDLLAACDRLLTPVGQVALVLPTAMADEILCISADYDLHGVCYTAVINRAGKEANRVLLLLGRGLNRCEQGEIVIHSAGGAYSDRYIQLTHPFYLKM.

The protein belongs to the methyltransferase superfamily. tRNA (adenine-N(6)-)-methyltransferase family.

The protein localises to the cytoplasm. It carries out the reaction adenosine(37) in tRNA1(Val) + S-adenosyl-L-methionine = N(6)-methyladenosine(37) in tRNA1(Val) + S-adenosyl-L-homocysteine + H(+). Functionally, specifically methylates the adenine in position 37 of tRNA(1)(Val) (anticodon cmo5UAC). This chain is tRNA1(Val) (adenine(37)-N6)-methyltransferase, found in Aeromonas salmonicida (strain A449).